The primary structure comprises 165 residues: UPF0303 protein Bphy_1660 (165 aa).

The protein belongs to the UPF0303 family.

This Paraburkholderia phymatum (strain DSM 17167 / CIP 108236 / LMG 21445 / STM815) (Burkholderia phymatum) protein is UPF0303 protein Bphy_1660.